The sequence spans 1014 residues: Ephrin type-B receptor 6 (1014 aa).

The N-terminal stretch at 1–32 (MATEGTTGSGSRVVAGMVCSLWLLVLGSSVLA) is a signal peptide. Over 33 to 591 (LEEVLLDTTG…LPEKLSLVIG (559 aa)) the chain is Extracellular. Residues 34 to 232 (EEVLLDTTGE…FSYTCPSVLR (199 aa)) form the Eph LBD domain. Fibronectin type-III domains lie at 364–479 (PPSA…TSHE) and 480–575 (VPSA…TLPQ). Asparagine 473 is a glycosylation site (N-linked (GlcNAc...) asparagine). Residues 592-612 (SILGALAFLLLAAITVLAVIF) traverse the membrane as a helical segment. The Cytoplasmic segment spans residues 613–1014 (QRKRRGTGYT…HLRQPGSVEV (402 aa)). Residues 663–912 (IKIEEVIGAG…QLVAAFDKMI (250 aa)) enclose the Protein kinase domain. 669–677 (IGAGSFGEV) serves as a coordination point for ATP. Residues 941 to 1005 (PCLDSPQAWL…LHNIQLLQQH (65 aa)) form the SAM domain. The short motif at 1012–1014 (VEV) is the PDZ-binding element.

This sequence belongs to the protein kinase superfamily. Tyr protein kinase family. Ephrin receptor subfamily. As to quaternary structure, interacts with CBL and EPHB1. Interacts with FYN; this interaction takes place in a ligand-independent manner. In terms of processing, ligand-binding increases phosphorylation on tyrosine residues. Phosphorylation on tyrosine residues is mediated by transphosphorylation by the catalytically active EPHB1 in a ligand-independent manner. Tyrosine phosphorylation of the receptor may act as a switch on the functional transition from cell adhesion/attraction to de-adhesion/repulsion. In terms of tissue distribution, high level in thymus, and brain. Very low levels of expression in kidney, lung, liver, bone marrow, skeletal muscle, spleen from 2 week old and adult mice, heart, testes and embryonic stem cells.

The protein localises to the cell membrane. It is found in the secreted. Its function is as follows. Kinase-defective receptor for members of the ephrin-B family. Binds to ephrin-B1 and ephrin-B2. Modulates cell adhesion and migration by exerting both positive and negative effects upon stimulation with ephrin-B2. Inhibits JNK activation, T-cell receptor-induced IL-2 secretion and CD25 expression upon stimulation with ephrin-B2. The chain is Ephrin type-B receptor 6 (Ephb6) from Mus musculus (Mouse).